The chain runs to 91 residues: UPF0358 protein Sca_0738 (91 aa).

Belongs to the UPF0358 family.

The chain is UPF0358 protein Sca_0738 from Staphylococcus carnosus (strain TM300).